Reading from the N-terminus, the 186-residue chain is Ribosome-recycling factor (186 aa).

Belongs to the RRF family.

The protein resides in the cytoplasm. Its function is as follows. Responsible for the release of ribosomes from messenger RNA at the termination of protein biosynthesis. May increase the efficiency of translation by recycling ribosomes from one round of translation to another. This Bartonella bacilliformis (strain ATCC 35685 / KC583 / Herrer 020/F12,63) protein is Ribosome-recycling factor.